A 299-amino-acid polypeptide reads, in one-letter code: Somaliensene A/B synthase (299 aa).

The next 7 helical transmembrane spans lie at 32 to 49 (WTTL…AVHT), 56 to 72 (TAVA…LFVY), 110 to 132 (IAVR…ALLW), 153 to 171 (LYAG…EIVA), 177 to 194 (AWRW…LMSV), 222 to 241 (VFLC…FLMA), and 247 to 269 (WWIV…RVVL).

It belongs to the UbiA prenyltransferase family. Requires Mg(2+) as cofactor.

Its subcellular location is the cell membrane. It catalyses the reaction (2E,6E,10E,14E)-geranylfarnesyl diphosphate = somaliensene A + diphosphate. It carries out the reaction (2E,6E,10E,14E)-geranylfarnesyl diphosphate = (-)-somaliensene B + diphosphate. The protein operates within secondary metabolite biosynthesis; terpenoid biosynthesis. Its function is as follows. Sesterterpene cyclase, which converts geranylfarnesyl diphosphate (GFPP) into the terpenes somaliensene A and somaliensene B. This Streptomyces somaliensis (strain ATCC 33201 / DSM 40738 / JCM 12659 / KCTC 9044 / NCTC 11332 / NRRL B-12077 / IP 733) protein is Somaliensene A/B synthase.